A 417-amino-acid polypeptide reads, in one-letter code: Protein-lysine 6-oxidase (417 aa).

A signal peptide spans 1-21 (MRFAWTVLLLGPLQLCALVHC). Residues 22 to 168 (APPAAGQQQP…PPSRVDGMVG (147 aa)) constitute a propeptide, removed by BMP1. Residues 64–89 (YQPQRRRDPGAAVPGAANASAQQPRT) form a disordered region. Positions 73-84 (GAAVPGAANASA) are enriched in low complexity. Asn-81, Asn-97, and Asn-144 each carry an N-linked (GlcNAc...) asparagine glycan. The disordered stretch occupies residues 137 to 174 (AGASRAENQTAPGEVPALSNLRPPSRVDGMVGDDPYNP). Tyr-187 is modified (sulfotyrosine). Positions 213–417 (PDLVADPYYI…YASGCTISPY (205 aa)) are lysyl-oxidase like. Disulfide bonds link Cys-238-Cys-244, Cys-291-Cys-340, Cys-324-Cys-330, Cys-351-Cys-361, and Cys-398-Cys-412. Cu cation is bound by residues His-292, His-294, and His-296. The lysine tyrosylquinone (Lys-Tyr) cross-link spans 320 to 355 (KASFCLEDTSCDYGYHRRFACTAHTQGLSPGCYDTY). The residue at position 355 (Tyr-355) is a 2',4',5'-topaquinone.

This sequence belongs to the lysyl oxidase family. Interacts with MFAP4. Interacts (via propeptide) with EFEMP2; this interaction is strong and facilitates formation of ternary complexes with ELN during elastic fiber assembly; this interaction limits interaction of EFEMP2 with FBLN5. It depends on Cu cation as a cofactor. Lysine tyrosylquinone residue is required as a cofactor. In terms of processing, the lysine tyrosylquinone cross-link (LTQ) is generated by condensation of the epsilon-amino group of a lysine with a topaquinone produced by oxidation of tyrosine. Proteolytically cleaved by BMP1 which removes the propeptide. Also proteolytically cleaved by ADAMTS2 and ADAMTS14, but not by ADAMTS3, at an additional cleavage site downstream of the BMP1 cleavage site. The propeptide plays a role in directing the deposition of this enzyme to elastic fibers, via interaction with tropoelastin. Cleavage by BMP1 to remove the propeptide does not increase enzymatic activity but increases binding to collagen. Cleavage by ADAMTS2 produces a form with reduced collagen-binding activity. Post-translationally, sulfated at Tyr-187 and also at either Tyr-183 or Tyr-184 which enhances binding to collagen. In terms of tissue distribution, heart, placenta, skeletal muscle, kidney, lung and pancreas.

Its subcellular location is the secreted. It localises to the extracellular space. The enzyme catalyses L-lysyl-[protein] + O2 + H2O = (S)-2-amino-6-oxohexanoyl-[protein] + H2O2 + NH4(+). In terms of biological role, responsible for the post-translational oxidative deamination of peptidyl lysine residues in precursors to fibrous collagen and elastin. Regulator of Ras expression. May play a role in tumor suppression. Plays a role in the aortic wall architecture. In Homo sapiens (Human), this protein is Protein-lysine 6-oxidase (LOX).